The sequence spans 71 residues: Small ribosomal subunit protein bS21 (71 aa).

The segment covering 48–60 (KKAAAVKRYKKKL) has biased composition (basic residues). Positions 48–71 (KKAAAVKRYKKKLQRESIRTTRMY) are disordered. The span at 61–71 (QRESIRTTRMY) shows a compositional bias: basic and acidic residues.

The protein belongs to the bacterial ribosomal protein bS21 family.

This chain is Small ribosomal subunit protein bS21, found in Psychrobacter sp. (strain PRwf-1).